We begin with the raw amino-acid sequence, 548 residues long: Chaperonin GroEL (548 aa).

Residues 30 to 33 (TLGP), Lys51, 87 to 91 (DGTTT), Gly415, 479 to 481 (NAA), and Asp495 each bind ATP. Residues 525–548 (PKEDKTSDASSSPAGGMGGMGGMM) are disordered. The segment covering 539–548 (GGMGGMGGMM) has biased composition (gly residues).

The protein belongs to the chaperonin (HSP60) family. Forms a cylinder of 14 subunits composed of two heptameric rings stacked back-to-back. Interacts with the co-chaperonin GroES.

It is found in the cytoplasm. The catalysed reaction is ATP + H2O + a folded polypeptide = ADP + phosphate + an unfolded polypeptide.. Together with its co-chaperonin GroES, plays an essential role in assisting protein folding. The GroEL-GroES system forms a nano-cage that allows encapsulation of the non-native substrate proteins and provides a physical environment optimized to promote and accelerate protein folding. The chain is Chaperonin GroEL from Buchnera aphidicola subsp. Rhopalosiphum padi.